The primary structure comprises 261 residues: MIETYNQPSPRSAATGLPVRMKIFMYLLTIFLITQMIGSALFAVYLHRRLDKIEDERNLHEDFVFMKTIQRCNTGERSLSLLNCEEIKSQFEGFVKDIMLNKEEKKKENSFEMQKGDQNPQIAAHVISEASSKTTSVLQWAEKGYYTMSNNLVTLENGKQLTVKRQGLYYIYAQVTFCSNREASSQAPFIASLCLKSPGRFERILLRAANTHSSAKPCGQQSIHLGGVFELQPGASVFVNVTDPSQVSHGTGFTSFGLLKL.

Residues 1-22 are Cytoplasmic-facing; that stretch reads MIETYNQPSPRSAATGLPVRMK. The chain crosses the membrane as a helical; Signal-anchor for type II membrane protein span at residues 23–43; sequence IFMYLLTIFLITQMIGSALFA. Residues 44–261 lie on the Extracellular side of the membrane; that stretch reads VYLHRRLDKI…GFTSFGLLKL (218 aa). The region spanning 122-261 is the THD domain; sequence IAAHVISEAS…GFTSFGLLKL (140 aa). Cys178 and Cys218 form a disulfide bridge. Asn240 is a glycosylation site (N-linked (GlcNAc...) asparagine).

It belongs to the tumor necrosis factor family. Homotrimer. Interacts with CD28. CD40 ligand, soluble form: Exists as either a monomer or a homotrimer. Forms a ternary complex between CD40 and integrins for CD40-CD40LG signaling. The soluble form derives from the membrane form by proteolytic processing.

It is found in the cell membrane. Its subcellular location is the cell surface. It localises to the secreted. In terms of biological role, cytokine that acts as a ligand to CD40/TNFRSF5. Costimulates T-cell proliferation and cytokine production. Its cross-linking on T-cells generates a costimulatory signal which enhances the production of IL4 and IL10 in conjunction with the TCR/CD3 ligation and CD28 costimulation. Induces the activation of NF-kappa-B. Induces the activation of kinases MAPK8 and PAK2 in T-cells. Mediates B-cell proliferation in the absence of co-stimulus as well as IgE production in the presence of IL4. Involved in immunoglobulin class switching. Functionally, acts as a ligand for integrins, specifically ITGA5:ITGB1 and ITGAV:ITGB3; both integrins and the CD40 receptor are required for activation of CD40-CD40LG signaling, which have cell-type dependent effects, such as B-cell activation, NF-kappa-B signaling and anti-apoptotic signaling. The polypeptide is CD40 ligand (CD40LG) (Cercocebus atys (Sooty mangabey)).